Here is a 216-residue protein sequence, read N- to C-terminus: Thiamine-phosphate synthase (216 aa).

4-amino-2-methyl-5-(diphosphooxymethyl)pyrimidine is bound by residues 41–45 (QYREK) and Asn73. Mg(2+)-binding residues include Asp74 and Asp93. Position 111 (Ser111) interacts with 4-amino-2-methyl-5-(diphosphooxymethyl)pyrimidine. 2-[(2R,5Z)-2-carboxy-4-methylthiazol-5(2H)-ylidene]ethyl phosphate is bound at residue 137–139 (TTT). 4-amino-2-methyl-5-(diphosphooxymethyl)pyrimidine is bound at residue Lys140. 2-[(2R,5Z)-2-carboxy-4-methylthiazol-5(2H)-ylidene]ethyl phosphate contacts are provided by residues Gly168 and 188–189 (VS).

The protein belongs to the thiamine-phosphate synthase family. The cofactor is Mg(2+).

The catalysed reaction is 2-[(2R,5Z)-2-carboxy-4-methylthiazol-5(2H)-ylidene]ethyl phosphate + 4-amino-2-methyl-5-(diphosphooxymethyl)pyrimidine + 2 H(+) = thiamine phosphate + CO2 + diphosphate. It catalyses the reaction 2-(2-carboxy-4-methylthiazol-5-yl)ethyl phosphate + 4-amino-2-methyl-5-(diphosphooxymethyl)pyrimidine + 2 H(+) = thiamine phosphate + CO2 + diphosphate. It carries out the reaction 4-methyl-5-(2-phosphooxyethyl)-thiazole + 4-amino-2-methyl-5-(diphosphooxymethyl)pyrimidine + H(+) = thiamine phosphate + diphosphate. It functions in the pathway cofactor biosynthesis; thiamine diphosphate biosynthesis; thiamine phosphate from 4-amino-2-methyl-5-diphosphomethylpyrimidine and 4-methyl-5-(2-phosphoethyl)-thiazole: step 1/1. Functionally, condenses 4-methyl-5-(beta-hydroxyethyl)thiazole monophosphate (THZ-P) and 2-methyl-4-amino-5-hydroxymethyl pyrimidine pyrophosphate (HMP-PP) to form thiamine monophosphate (TMP). The chain is Thiamine-phosphate synthase from Chloroflexus aurantiacus (strain ATCC 29366 / DSM 635 / J-10-fl).